A 1007-amino-acid chain; its full sequence is Probable beta-galactosidase A (1007 aa).

The first 18 residues, 1–18 (MKLSSACAIALLAAQAAG), serve as a signal peptide directing secretion. Substrate is bound by residues Tyr-96, Asn-140, Ala-141, and Glu-142. Asn-156 carries an N-linked (GlcNAc...) asparagine glycan. A substrate-binding site is contributed by Asn-199. Glu-200 acts as the Proton donor in catalysis. A disulfide bridge links Cys-205 with Cys-206. Tyr-260 is a binding site for substrate. Cys-266 and Cys-315 form a disulfide bridge. Catalysis depends on Glu-298, which acts as the Nucleophile. Tyr-364 serves as a coordination point for substrate. N-linked (GlcNAc...) asparagine glycans are attached at residues Asn-373, Asn-402, Asn-422, Asn-478, Asn-522, Asn-622, Asn-739, Asn-760, Asn-777, and Asn-805. A disordered region spans residues 862–881 (RQGFHQPEPPSQDWKSSSPL). An N-linked (GlcNAc...) asparagine glycan is attached at Asn-914.

Belongs to the glycosyl hydrolase 35 family.

The protein localises to the secreted. It carries out the reaction Hydrolysis of terminal non-reducing beta-D-galactose residues in beta-D-galactosides.. Functionally, cleaves beta-linked terminal galactosyl residues from gangliosides, glycoproteins, and glycosaminoglycans. The chain is Probable beta-galactosidase A (lacA) from Aspergillus phoenicis (Aspergillus saitoi).